A 227-amino-acid chain; its full sequence is Prolactin (227 aa).

The N-terminal stretch at 1 to 28 (MNIKGSPWKGSLLLLLVSNLLLCQSVAP) is a signal peptide. An intrachain disulfide couples Cys32 to Cys39. Ser54 is modified (phosphoserine). N-linked (GlcNAc...) asparagine; partial glycosylation is present at Asn59. Ser62, Ser118, Ser163, and Ser194 each carry phosphoserine. 2 disulfides stabilise this stretch: Cys86–Cys202 and Cys219–Cys227.

The protein belongs to the somatotropin/prolactin family. In terms of assembly, interacts with PRLR.

The protein localises to the secreted. Functionally, prolactin acts primarily on the mammary gland by promoting lactation. The polypeptide is Prolactin (PRL) (Homo sapiens (Human)).